Reading from the N-terminus, the 218-residue chain is Small ribosomal subunit protein uS3 (218 aa).

The KH type-2 domain occupies 39-107 (IRDYIKSKLL…QISINIVEIK (69 aa)).

The protein belongs to the universal ribosomal protein uS3 family. As to quaternary structure, part of the 30S ribosomal subunit. Forms a tight complex with proteins S10 and S14.

Its function is as follows. Binds the lower part of the 30S subunit head. Binds mRNA in the 70S ribosome, positioning it for translation. The polypeptide is Small ribosomal subunit protein uS3 (Desulforudis audaxviator (strain MP104C)).